Consider the following 507-residue polypeptide: Phosphoenolpyruvate carboxylase (507 aa).

Residues 1 to 25 (MHKIDRKIPNIMGTQHPDNAGVPFF) are disordered.

It belongs to the PEPCase type 2 family. Homotetramer. Mg(2+) serves as cofactor.

The enzyme catalyses oxaloacetate + phosphate = phosphoenolpyruvate + hydrogencarbonate. Its function is as follows. Catalyzes the irreversible beta-carboxylation of phosphoenolpyruvate (PEP) to form oxaloacetate (OAA), a four-carbon dicarboxylic acid source for the tricarboxylic acid cycle. In Oenococcus oeni (strain ATCC BAA-331 / PSU-1), this protein is Phosphoenolpyruvate carboxylase.